The chain runs to 72 residues: Protein kish-A (72 aa).

Positions Met1–Ala26 are cleaved as a signal peptide. Topologically, residues Leu27–Lys53 are extracellular. The N-linked (GlcNAc...) asparagine glycan is linked to Asn35. Residues Ser54–Met71 form a helical membrane-spanning segment. Residue Gln72 is a topological domain, cytoplasmic.

The protein belongs to the KISH family.

It is found in the golgi apparatus membrane. Involved in the early part of the secretory pathway. This chain is Protein kish-A (tmem167a), found in Xenopus tropicalis (Western clawed frog).